A 212-amino-acid chain; its full sequence is Ribosomal RNA small subunit methyltransferase G (212 aa).

S-adenosyl-L-methionine contacts are provided by residues Gly73, Phe78, 96–98, 124–125, and Arg141; these read ESS and VE.

It belongs to the methyltransferase superfamily. RNA methyltransferase RsmG family.

It localises to the cytoplasm. Functionally, specifically methylates the N7 position of a guanine in 16S rRNA. The protein is Ribosomal RNA small subunit methyltransferase G of Aster yellows witches'-broom phytoplasma (strain AYWB).